We begin with the raw amino-acid sequence, 85 residues long: MKLINIGFGNMVVSSRIVAIISPDSAPIKRFLSDAKTRNELIDATYGRKTRAVLVLDSGHIVLSALHPETIAARIEGGDKEEESS.

Belongs to the RemA family.

This chain is Putative regulatory protein Dtur_1444, found in Dictyoglomus turgidum (strain DSM 6724 / Z-1310).